The primary structure comprises 136 residues: Small ribosomal subunit protein uS9 (136 aa).

The segment at 97-136 (SPDNRKPLKTEGHLSRDPRAKERRKYGLKKARKAPQFSKR) is disordered. Residues 98 to 116 (PDNRKPLKTEGHLSRDPRA) are compositionally biased toward basic and acidic residues. Positions 117–136 (KERRKYGLKKARKAPQFSKR) are enriched in basic residues.

It belongs to the universal ribosomal protein uS9 family.

The polypeptide is Small ribosomal subunit protein uS9 (Prochlorococcus marinus (strain MIT 9301)).